The sequence spans 286 residues: Beta-lactamase SHV-2 (286 aa).

Residues 1 to 21 form the signal peptide; it reads MRYIRLCIISLLATLPLAVHA. The active-site Acyl-ester intermediate is the serine 66. A disulfide bridge links cysteine 73 with cysteine 119. Residue glutamate 164 is the Proton acceptor of the active site. 230-232 is a substrate binding site; the sequence is KTG.

Belongs to the class-A beta-lactamase family.

It carries out the reaction a beta-lactam + H2O = a substituted beta-amino acid. This enzyme hydrolyzes cefotaxime, ceftazidime and other broad spectrum cephalosporins. The chain is Beta-lactamase SHV-2 (bla) from Escherichia coli.